A 238-amino-acid chain; its full sequence is Probable transcriptional regulatory protein SZO_02930 (238 aa).

This sequence belongs to the TACO1 family. YeeN subfamily.

Its subcellular location is the cytoplasm. This chain is Probable transcriptional regulatory protein SZO_02930, found in Streptococcus equi subsp. zooepidemicus (strain H70).